The sequence spans 224 residues: Thylakoid lumenal 15 kDa protein 1, chloroplastic (224 aa).

The transit peptide at 1–34 directs the protein to the chloroplast; it reads MVILSNVSLFSCCNISQKPSLFSPSSRSSHCPIR. The N-terminal 47 residues, 35-81, are a transit peptide targeting the thylakoid; that stretch reads CSQSQEGKEVVTSPLRSVVWSLGEEVSKRSLFALVSASLFFVDPALA. Pentapeptide repeat domains follow at residues 116–155 and 156–196; these read SILR…DFSL and ANVT…PLRD.

The protein resides in the plastid. It localises to the chloroplast thylakoid lumen. This chain is Thylakoid lumenal 15 kDa protein 1, chloroplastic, found in Arabidopsis thaliana (Mouse-ear cress).